We begin with the raw amino-acid sequence, 308 residues long: Nodulation protein D 1 (308 aa).

Positions 6-63 (LDLNLLVALDALMTERKLTAAARRINLSQPAMSAAIARLRTYFGDELFSMQGRELIPT) constitute an HTH lysR-type domain. Positions 23 to 42 (LTAAARRINLSQPAMSAAIA) form a DNA-binding region, H-T-H motif.

The protein belongs to the LysR transcriptional regulatory family.

Functionally, nodD regulates the expression of the nodABCFE genes which encode other nodulation proteins. NodD is also a negative regulator of its own expression. Binds flavonoids as inducers. The polypeptide is Nodulation protein D 1 (nodD1) (Rhizobium meliloti (strain 1021) (Ensifer meliloti)).